Reading from the N-terminus, the 167-residue chain is 2-C-methyl-D-erythritol 2,4-cyclodiphosphate synthase (167 aa).

The a divalent metal cation site is built by Asp11 and His13. Residues 11 to 13 (DIH) and 37 to 38 (HS) each bind 4-CDP-2-C-methyl-D-erythritol 2-phosphate. His45 lines the a divalent metal cation pocket. 4-CDP-2-C-methyl-D-erythritol 2-phosphate contacts are provided by residues 59–61 (DIG), 64–68 (FSDTD), 103–109 (AQAPKMA), and Arg145.

It belongs to the IspF family. Homotrimer. It depends on a divalent metal cation as a cofactor.

The catalysed reaction is 4-CDP-2-C-methyl-D-erythritol 2-phosphate = 2-C-methyl-D-erythritol 2,4-cyclic diphosphate + CMP. It participates in isoprenoid biosynthesis; isopentenyl diphosphate biosynthesis via DXP pathway; isopentenyl diphosphate from 1-deoxy-D-xylulose 5-phosphate: step 4/6. Involved in the biosynthesis of isopentenyl diphosphate (IPP) and dimethylallyl diphosphate (DMAPP), two major building blocks of isoprenoid compounds. Catalyzes the conversion of 4-diphosphocytidyl-2-C-methyl-D-erythritol 2-phosphate (CDP-ME2P) to 2-C-methyl-D-erythritol 2,4-cyclodiphosphate (ME-CPP) with a corresponding release of cytidine 5-monophosphate (CMP). The polypeptide is 2-C-methyl-D-erythritol 2,4-cyclodiphosphate synthase (Nitrosomonas eutropha (strain DSM 101675 / C91 / Nm57)).